A 2203-amino-acid polypeptide reads, in one-letter code: Voltage-dependent L-type calcium channel subunit alpha-1D (2203 aa).

Disordered stretches follow at residues 1–51 and 64–100; these read MMMM…QTVL and KAAQ…SSNS. The Cytoplasmic segment spans residues 1–126; the sequence is MMMMMMMKKM…RACISIVDWK (126 aa). The segment covering 38–51 has biased composition (polar residues); sequence GPTSQPNSSKQTVL. The span at 82-93 shows a compositional bias: basic residues; it reads QRKRQQYAKSKK. An I repeat occupies 112–408; the sequence is NNPIRRACIS…NLVLGVLSGE (297 aa). A helical membrane pass occupies residues 127 to 145; that stretch reads PFDIFILLAIFANCVALAI. At 146 to 163 the chain is on the extracellular side; the sequence is YIPFPEDDSNSTNHNLEK. The N-linked (GlcNAc...) asparagine glycan is linked to Asn-155. Residues 164-183 traverse the membrane as a helical segment; sequence VEYAFLIIFTVETFLKIIAS. Residues 184-195 lie on the Cytoplasmic side of the membrane; that stretch reads GLLLHPNASVRN. The helical transmembrane segment at 196-214 threads the bilayer; the sequence is GWNLLDFVIVIVGLFSVIL. The Extracellular segment spans residues 215–235; sequence EQLTKETEGGNHSSGKSGGFD. A glycan (N-linked (GlcNAc...) asparagine) is linked at Asn-225. Residues 236-254 form a helical membrane-spanning segment; that stretch reads VKALRAFRVLRPLRLVSGV. Residues 255 to 273 lie on the Cytoplasmic side of the membrane; it reads PSLQVVLNSIIKAMVPLLH. The chain crosses the membrane as a helical span at residues 274–293; the sequence is IALLVLFVIIIYAIIGLELF. Residues 294 to 381 lie on the Extracellular side of the membrane; sequence IGKMHKTCFF…WVNDAIGWEW (88 aa). Asn-329 carries an N-linked (GlcNAc...) asparagine glycan. Glu-364 is a Ca(2+) binding site. Residues 382–406 traverse the membrane as a helical segment; it reads PWVYFVSLIILGSFFVLNLVLGVLS. The Cytoplasmic segment spans residues 407–582; it reads GEFSKEREKA…RRCRAAVKSV (176 aa). Positions 429 to 446 are binding to the beta subunit; it reads QQLEEDLKGYLDWITQAE. A disordered region spans residues 449–480; that stretch reads DPENEEEGGEEGKRNTSMPTSETESVNTENVS. The span at 463–479 shows a compositional bias: polar residues; that stretch reads NTSMPTSETESVNTENV. Residues 528–774 form an II repeat; the sequence is EALCVCRCSL…DWNAVMYDGI (247 aa). The chain crosses the membrane as a helical span at residues 583–602; it reads TFYWLVIVLVFLNTLTISSE. Residues 603–617 are Extracellular-facing; that stretch reads HYNQPDWLTQIQDIA. A helical membrane pass occupies residues 618 to 636; the sequence is NKVLLALFTCEMLVKMYSL. The Cytoplasmic segment spans residues 637 to 644; it reads GLQAYFVS. A helical membrane pass occupies residues 645-663; it reads LFNRFDCFVVCGGITETIL. Topologically, residues 664 to 673 are extracellular; that stretch reads VELELMSPLG. A helical membrane pass occupies residues 674–692; that stretch reads VSVFRCVRLLRIFKVTRHW. The Cytoplasmic portion of the chain corresponds to 693–711; it reads TSLSNLVASLLNSMKSIAS. The chain crosses the membrane as a helical span at residues 712-732; it reads LLLLLFLFIIIFSLLGMQLFG. The Extracellular portion of the chain corresponds to 733-786; the sequence is GKFNFDETQTKRSTFDNFPQALLTVFQILTGEDWNAVMYDGIMAYGGPSSSGMI. Glu-764 lines the Ca(2+) pocket. Residues 787 to 811 form a helical membrane-spanning segment; sequence VCIYFIILFICGNYILLKLFLAIAV. The Cytoplasmic portion of the chain corresponds to 812 to 945; sequence DNLADAESLN…VGCHKLINHH (134 aa). Residues 822–909 are disordered; sequence TAQKEEAEEK…AGPRPRRISE (88 aa). Over residues 824-849 the composition is skewed to basic and acidic residues; it reads QKEEAEEKERKKIARKESLENKKNNK. Positions 850 to 861 are enriched in polar residues; sequence PEVNQIANSDNK. A compositionally biased stretch (acidic residues) spans 884–897; it reads VGEEEEEEEEDEPE. The III repeat unit spans residues 892–1174; it reads EEDEPEVPAG…LLYKAIDSNG (283 aa). Residues 946-964 traverse the membrane as a helical segment; it reads IFTNLILVFIMLSSAALAA. Residues 965 to 980 lie on the Extracellular side of the membrane; it reads EDPIRSHSFRNTILGY. The chain crosses the membrane as a helical span at residues 981–1000; it reads FDYAFTAIFTVEILLKMTTF. At 1001 to 1012 the chain is on the cytoplasmic side; that stretch reads GAFLHKGAFCRN. Residues 1013–1031 form a helical membrane-spanning segment; the sequence is YFNLLDMLVVGVSLVSFGI. Residues 1032–1037 are Extracellular-facing; the sequence is QSSAIS. A helical transmembrane segment spans residues 1038–1057; it reads VVKILRVLRVLRPLRAINRA. The Cytoplasmic portion of the chain corresponds to 1058 to 1076; that stretch reads KGLKHVVQCVFVAIRTIGN. A helical membrane pass occupies residues 1077–1096; the sequence is IMIVTTLLQFMFACIGVQLF. Residues 1097 to 1186 are Extracellular-facing; the sequence is KGKFYRCTDE…VGPVYNYRVE (90 aa). Residues 1134–1224 are dihydropyridine binding; that stretch reads RIWQNSDFNF…QEQGEKEYKN (91 aa). Glu-1160 provides a ligand contact to Ca(2+). The chain crosses the membrane as a helical span at residues 1187–1207; sequence ISIFFIIYIIIVAFFMMNIFV. The Cytoplasmic portion of the chain corresponds to 1208-1264; it reads GFVIVTFQEQGEKEYKNCELDKNQRQCVEYALKARPLRRYIPKNPYQYKFWYVVNSS. An IV repeat occupies 1211-1486; the sequence is IVTFQEQGEK…YTCGSNFAIV (276 aa). The chain crosses the membrane as a helical span at residues 1265 to 1283; that stretch reads PFEYMMFVLIMLNTLCLAM. At 1284 to 1298 the chain is on the extracellular side; that stretch reads QHYEQSKMFNDAMDI. A helical membrane pass occupies residues 1299-1318; it reads LNMVFTGVFTVEMVLKVIAF. The Cytoplasmic portion of the chain corresponds to 1319–1325; sequence KPKGYFS. A helical transmembrane segment spans residues 1326 to 1347; that stretch reads DAWNTFDSLIVIGSIIDVALSE. Over 1348–1357 the chain is Extracellular; it reads ADNSEESNRI. The helical transmembrane segment at 1358 to 1377 threads the bilayer; the sequence is SITFFRLFRVMRLVKLLSRG. The Cytoplasmic portion of the chain corresponds to 1378-1396; the sequence is EGIRTLLWTFIKSFQALPY. The chain crosses the membrane as a helical span at residues 1397 to 1416; it reads VALLIAMLFFIYAVIGMQMF. Topologically, residues 1417-1483 are extracellular; it reads GKVAMRDNNQ…GEEYTCGSNF (67 aa). The dihydropyridine binding stretch occupies residues 1464 to 1530; it reads LCDPDSDYNP…LGPHHLDEFK (67 aa). Residues 1476 to 1519 form a phenylalkylamine binding region; sequence EYTCGSNFAIVYFISFYMLCAFLIINLFVAVIMDNFDYLTRDWS. Residues 1484 to 1508 form a helical membrane-spanning segment; sequence AIVYFISFYMLCAFLIINLFVAVIM. Over 1509-2203 the chain is Cytoplasmic; sequence DNFDYLTRDW…ADEMICITTL (695 aa). Disordered regions lie at residues 1734 to 1766, 1795 to 1816, 1920 to 1963, and 2176 to 2195; these read NHVN…PASD, TSTN…KRPS, FERP…HRRS, and GPGY…DLAD. The segment covering 1795 to 1806 has biased composition (polar residues); it reads TSTNANLNNANM. The span at 2180 to 2195 shows a compositional bias: acidic residues; sequence SDEEPDPGREEEDLAD.

It belongs to the calcium channel alpha-1 subunit (TC 1.A.1.11) family. CACNA1D subfamily. As to quaternary structure, voltage-dependent calcium channels are multisubunit complexes, consisting of alpha-1, alpha-2, beta and delta subunits in a 1:1:1:1 ratio. The channel activity is directed by the pore-forming and voltage-sensitive alpha-1 subunit. In many cases, this subunit is sufficient to generate voltage-sensitive calcium channel activity. The auxiliary subunits beta and alpha-2/delta linked by a disulfide bridge regulate the channel activity. Interacts with CABP1 and CABP4, resulting in a near elimination of calcium-dependent inactivation of the channel. Interacts with RIMBP2. In terms of tissue distribution, expressed in brain, pancreatic islets and B-lymphocytes.

The protein resides in the membrane. The catalysed reaction is Ca(2+)(in) = Ca(2+)(out). Its function is as follows. Voltage-sensitive calcium channels (VSCC) mediate the entry of calcium ions into excitable cells and are also involved in a variety of calcium-dependent processes, including muscle contraction, hormone or neurotransmitter release, gene expression, cell motility, cell division and cell death. The isoform alpha-1D gives rise to L-type calcium currents. Long-lasting (L-type) calcium channels belong to the 'high-voltage activated' (HVA) group. They are blocked by dihydropyridines (DHP), phenylalkylamines, and by benzothiazepines. In terms of biological role, voltage-sensitive calcium channels (VSCC) mediate the entry of calcium ions into excitable cells and are also involved in a variety of calcium-dependent processes, including muscle contraction, hormone or neurotransmitter release, gene expression, cell motility, cell division and cell death. The isoform alpha-1D gives rise to L-type calcium currents. This chain is Voltage-dependent L-type calcium channel subunit alpha-1D (Cacna1d), found in Rattus norvegicus (Rat).